Reading from the N-terminus, the 817-residue chain is MYNTRRSAYMNSCSTAMELPPQSLHQNWQDTEYVNTTCSSDMNSDMSMYNDDKDDPFYEDEGSGGGTSGGGKKSSRKRANTTSSSGGNEKESKRTANKVCRVCGDKAFSYNFNVITCESCKAFFRRNANKEKEIRCPFNEQCEINMVSRRFCQRCRLTKCFAVGMKKEWIMSEEARLEKKQRVEENRERRLQDAMNRALEEACMEDESENSYDEAPAPSHQMSVRQYLANDDAPHKSSDEVQPHLGHHGYNQKEDKMMNFYQDGPSDQGDYSLPSNSCASSSQLDTSVNCGATTIADNGASPSNTVTIPAAVDVERKPIPTNVLFSASMSAIQDVAAIISNAETKNLGMCAPDVVNENLMNVAQAAVQAQAIVNHTQQLAAAVVAQQVVSNMAPVMPTVNPLDPLLAPAFIAPPMPTPINVPITTPIAGALSTPLPPPIVPPGHSSINPVIPIIPKEMPVSVSLLNQLEQTPAEMVTVPKDMLMKLIQKNSRSTCTCSCMCGRYPPGSCIVDEVTKDLLNGGSSNSSNATDRDETRLETTEDMQMNGLLPGDCNSSIQWLNQQSSAQAFVDPITHSMTAEEAQTQRERRDSIFGSFSAADQGTVTQPKSVQEETIWEHTVAENESRELSDEEIEKMEELTEISNQWISMRLDSMPILDLFSKKNVEKIVNGLKLLSSFRFLPQVDKRSVVKRGLFNYCVVKWMQHKESMSIDGLSDAARRDFMNIIRREEFNYRVQPGAFNTLAISVLFHSISDNLISTDVYMEHLVFKKLLDKNLPIKVSSDTVYNNYYPYIIKAAKHLEKATKGLSDELVAHAVS.

The interval 49 to 91 is disordered; the sequence is YNDDKDDPFYEDEGSGGGTSGGGKKSSRKRANTTSSSGGNEKE. Over residues 52–62 the composition is skewed to acidic residues; the sequence is DKDDPFYEDEG. Positions 63-72 are enriched in gly residues; the sequence is SGGGTSGGGK. A DNA-binding region (nuclear receptor) is located at residues 97-172; sequence NKVCRVCGDK…VGMKKEWIMS (76 aa). 2 consecutive NR C4-type zinc fingers follow at residues 100–120 and 136–155; these read CRVC…CESC and CPFN…CQRC. Residues 202-212 show a composition bias toward acidic residues; that stretch reads ACMEDESENSY. 2 disordered regions span residues 202-221 and 258-284; these read ACME…PSHQ and MNFY…SSQL. Residues 273–284 show a composition bias toward polar residues; that stretch reads LPSNSCASSSQL.

Belongs to the nuclear hormone receptor family.

Its subcellular location is the nucleus. Its function is as follows. Orphan nuclear receptor. This Caenorhabditis elegans protein is Nuclear hormone receptor family member nhr-48 (nhr-48).